A 305-amino-acid chain; its full sequence is tRNA dimethylallyltransferase (305 aa).

9–16 (GPTASGKS) contacts ATP. A substrate-binding site is contributed by 11–16 (TASGKS). An interaction with substrate tRNA region spans residues 34 to 37 (DSKQ).

It belongs to the IPP transferase family. In terms of assembly, monomer. The cofactor is Mg(2+).

The catalysed reaction is adenosine(37) in tRNA + dimethylallyl diphosphate = N(6)-dimethylallyladenosine(37) in tRNA + diphosphate. Catalyzes the transfer of a dimethylallyl group onto the adenine at position 37 in tRNAs that read codons beginning with uridine, leading to the formation of N6-(dimethylallyl)adenosine (i(6)A). This is tRNA dimethylallyltransferase from Anaplasma marginale (strain St. Maries).